Consider the following 227-residue polypeptide: Esterase Rv3036c (227 aa).

A helical transmembrane segment spans residues 3–23 (YLIATAVLVAVVLVGWPAAGA).

Belongs to the RsiV family.

It localises to the cell membrane. It is found in the secreted. The protein resides in the cell wall. It carries out the reaction a fatty acid ester + H2O = an aliphatic alcohol + a fatty acid + H(+). It catalyses the reaction an acetyl ester + H2O = an aliphatic alcohol + acetate + H(+). The catalysed reaction is a butanoate ester + H2O = an aliphatic alcohol + butanoate + H(+). The enzyme catalyses a hexanoate ester + H2O = an aliphatic alcohol + hexanoate + H(+). It carries out the reaction a dodecanoate ester + H2O = an aliphatic alcohol + dodecanoate + H(+). It catalyses the reaction a tetradecanoate ester + H2O = an aliphatic alcohol + tetradecanoate + H(+). The catalysed reaction is an octanoate ester + H2O = an aliphatic alcohol + octanoate + H(+). Its function is as follows. Hydrolyzes ester substrates carbon chain lengths ranging from C2 to C14. In vitro, acetate (C2), butyrate (C4) and caprylate (C6) are hydrolyzed with high efficiency. Has lower activity against laurate (C12), myristate (C14) and caproate (C8), and weak activity against palmitate (C16). The protein is Esterase Rv3036c of Mycobacterium tuberculosis (strain ATCC 25618 / H37Rv).